The chain runs to 340 residues: Glycerol-3-phosphate dehydrogenase [NAD(P)+] (340 aa).

4 residues coordinate NADPH: Ser-11, Trp-12, Arg-33, and Lys-106. Residues Lys-106, Gly-137, and Ser-139 each coordinate sn-glycerol 3-phosphate. Residue Ala-141 participates in NADPH binding. Residues Lys-192, Asp-245, Ser-255, Arg-256, and Asn-257 each contribute to the sn-glycerol 3-phosphate site. Lys-192 serves as the catalytic Proton acceptor. Arg-256 lines the NADPH pocket. Positions 280 and 282 each coordinate NADPH.

It belongs to the NAD-dependent glycerol-3-phosphate dehydrogenase family.

The protein resides in the cytoplasm. It carries out the reaction sn-glycerol 3-phosphate + NAD(+) = dihydroxyacetone phosphate + NADH + H(+). The enzyme catalyses sn-glycerol 3-phosphate + NADP(+) = dihydroxyacetone phosphate + NADPH + H(+). It functions in the pathway membrane lipid metabolism; glycerophospholipid metabolism. Functionally, catalyzes the reduction of the glycolytic intermediate dihydroxyacetone phosphate (DHAP) to sn-glycerol 3-phosphate (G3P), the key precursor for phospholipid synthesis. The protein is Glycerol-3-phosphate dehydrogenase [NAD(P)+] of Bacillus cereus (strain B4264).